Reading from the N-terminus, the 275-residue chain is Polyamine aminopropyltransferase (275 aa).

One can recognise a PABS domain in the interval 2-235 (ELWFTEKQTK…GLWTFTIGSK (234 aa)). Residue glutamine 31 participates in S-methyl-5'-thioadenosine binding. Positions 62 and 86 each coordinate spermidine. S-methyl-5'-thioadenosine-binding positions include glutamate 106 and 137 to 138 (DG). The active-site Proton acceptor is aspartate 155. 155 to 158 (DSTE) serves as a coordination point for spermidine. Proline 162 contacts S-methyl-5'-thioadenosine.

This sequence belongs to the spermidine/spermine synthase family. In terms of assembly, homodimer or homotetramer.

The protein localises to the cytoplasm. The catalysed reaction is S-adenosyl 3-(methylsulfanyl)propylamine + putrescine = S-methyl-5'-thioadenosine + spermidine + H(+). It participates in amine and polyamine biosynthesis; spermidine biosynthesis; spermidine from putrescine: step 1/1. Its function is as follows. Catalyzes the irreversible transfer of a propylamine group from the amino donor S-adenosylmethioninamine (decarboxy-AdoMet) to putrescine (1,4-diaminobutane) to yield spermidine. This chain is Polyamine aminopropyltransferase, found in Bacillus cytotoxicus (strain DSM 22905 / CIP 110041 / 391-98 / NVH 391-98).